A 264-amino-acid chain; its full sequence is Proliferating cell nuclear antigen (264 aa).

The DNA-binding element occupies 61–80; it reads RCDRNISMGMNLANMAKMLK.

Belongs to the PCNA family.

It localises to the nucleus. This protein is an auxiliary protein of DNA polymerase delta and is involved in the control of eukaryotic DNA replication by increasing the polymerase's processibility during elongation of the leading strand. In Nicotiana tabacum (Common tobacco), this protein is Proliferating cell nuclear antigen (PCNA).